The sequence spans 208 residues: 3-demethoxyubiquinol 3-hydroxylase (208 aa).

Positions 57, 87, 90, 139, 171, and 174 each coordinate Fe cation.

The protein belongs to the COQ7 family. It depends on Fe cation as a cofactor.

Its subcellular location is the cell membrane. The enzyme catalyses a 5-methoxy-2-methyl-3-(all-trans-polyprenyl)benzene-1,4-diol + AH2 + O2 = a 3-demethylubiquinol + A + H2O. It functions in the pathway cofactor biosynthesis; ubiquinone biosynthesis. In terms of biological role, catalyzes the hydroxylation of 2-nonaprenyl-3-methyl-6-methoxy-1,4-benzoquinol during ubiquinone biosynthesis. The protein is 3-demethoxyubiquinol 3-hydroxylase of Verminephrobacter eiseniae (strain EF01-2).